The following is a 299-amino-acid chain: Protease HtpX homolog (299 aa).

2 helical membrane-spanning segments follow: residues 16 to 36 and 38 to 58; these read VMAAFVILLAVIGLAVGYVFF and SAIAGLLVALIAAVFYMVLMI. Histidine 144 contributes to the Zn(2+) binding site. Residue glutamate 145 is part of the active site. Histidine 148 provides a ligand contact to Zn(2+). The next 2 membrane-spanning stretches (helical) occupy residues 159 to 179 and 198 to 218; these read IALALTAAISLLVNWGMNAFW and VLLMILAIVVIILAPLAASLV. Zn(2+) is bound at residue glutamate 227.

The protein belongs to the peptidase M48B family. The cofactor is Zn(2+).

The protein localises to the cell membrane. This Lactiplantibacillus plantarum (strain ATCC BAA-793 / NCIMB 8826 / WCFS1) (Lactobacillus plantarum) protein is Protease HtpX homolog.